Consider the following 405-residue polypeptide: Sialic acid transporter NanX (405 aa).

At M1 to A20 the chain is on the cytoplasmic side. A helical membrane pass occupies residues W21–I41. Over K42 to T53 the chain is Periplasmic. Residues L54–A74 traverse the membrane as a helical segment. Topologically, residues D75 to K80 are cytoplasmic. Residues P81–T101 form a helical membrane-spanning segment. A topological domain (periplasmic) is located at residue N102. The helical transmembrane segment at L103–C123 threads the bilayer. The Cytoplasmic portion of the chain corresponds to A124–K139. The helical transmembrane segment at A140 to P160 threads the bilayer. Residues Q161–E164 are Periplasmic-facing. The chain crosses the membrane as a helical span at residues V165–I185. The Cytoplasmic segment spans residues R186–H214. Residues L215 to I235 form a helical membrane-spanning segment. Residues N236–T250 are Periplasmic-facing. Residues V251 to F271 traverse the membrane as a helical segment. Topologically, residues G272–K282 are cytoplasmic. A helical membrane pass occupies residues A283–V303. Residues K304–S307 lie on the Periplasmic side of the membrane. The helical transmembrane segment at L308–P328 threads the bilayer. Residues K329–T344 lie on the Cytoplasmic side of the membrane. Residues G345–I365 form a helical membrane-spanning segment. Residues S366 to L371 are Periplasmic-facing. A helical membrane pass occupies residues G372 to F392. Residues D393–K405 lie on the Cytoplasmic side of the membrane.

This sequence belongs to the major facilitator superfamily. Sugar transporter (TC 2.A.1.1) family.

The protein resides in the cell inner membrane. Probably transports across the inner membrane the two dehydrated forms of N-acetylneuraminate (Neu5Ac), 2,7-anhydro-N-acetylneuraminate (2,7-AN) and 2-deoxy-2,3-didehydro-N-acetylneuraminate (2,3-EN). This chain is Sialic acid transporter NanX, found in Escherichia coli (strain K12).